The sequence spans 1905 residues: von Willebrand factor A domain-containing protein 8 (1905 aa).

The N-terminal 45 residues, 1–45, are a transit peptide targeting the mitochondrion; it reads MQSRLLLLGAPGGLGDVASRRVRLLLRQVLRGRPGGDQQRLEVRL. The interaction with PEX7 stretch occupies residues 1–260; it reads MQSRLLLLGA…PLDPPLRSRF (260 aa). 446 to 453 serves as a coordination point for ATP; sequence GGKGCGKT. Residues 1541 to 1560 are compositionally biased toward basic and acidic residues; the sequence is ERDSNEDVSDPKHGKEDPDN. The disordered stretch occupies residues 1541-1583; the sequence is ERDSNEDVSDPKHGKEDPDNMPHVGGNTWAGGTGGRDTAGLGG. Over residues 1568 to 1583 the composition is skewed to gly residues; the sequence is TWAGGTGGRDTAGLGG. A VWFA domain is found at 1714–1896; it reads RLRLVVDVSG…KKIPQILQQI (183 aa).

As to quaternary structure, monomer. Interacts with PEX7. Interacts with PEX5 in a PEX7-dependent manner. Isoform 1 is predominantly expressed in liver, kidney, pancreas, heart, and skeletal muscle (at protein level).

It is found in the mitochondrion. In terms of biological role, exhibits ATPase activity in vitro. The protein is von Willebrand factor A domain-containing protein 8 (Vwa8) of Mus musculus (Mouse).